The sequence spans 185 residues: Ribosome-recycling factor (185 aa).

The protein belongs to the RRF family.

The protein resides in the cytoplasm. Responsible for the release of ribosomes from messenger RNA at the termination of protein biosynthesis. May increase the efficiency of translation by recycling ribosomes from one round of translation to another. The protein is Ribosome-recycling factor of Streptococcus equi subsp. equi (strain 4047).